Consider the following 124-residue polypeptide: Small ribosomal subunit protein uS12 (124 aa).

A 3-methylthioaspartic acid modification is found at D90.

It belongs to the universal ribosomal protein uS12 family. In terms of assembly, part of the 30S ribosomal subunit. Contacts proteins S8 and S17. May interact with IF1 in the 30S initiation complex.

Its function is as follows. With S4 and S5 plays an important role in translational accuracy. Interacts with and stabilizes bases of the 16S rRNA that are involved in tRNA selection in the A site and with the mRNA backbone. Located at the interface of the 30S and 50S subunits, it traverses the body of the 30S subunit contacting proteins on the other side and probably holding the rRNA structure together. The combined cluster of proteins S8, S12 and S17 appears to hold together the shoulder and platform of the 30S subunit. This Wolbachia sp. subsp. Brugia malayi (strain TRS) protein is Small ribosomal subunit protein uS12.